Reading from the N-terminus, the 403-residue chain is Argininosuccinate synthase (403 aa).

Residues 13–21 (AYSGGLDTS) and alanine 40 contribute to the ATP site. L-citrulline is bound by residues tyrosine 92 and serine 97. Glycine 122 provides a ligand contact to ATP. L-aspartate contacts are provided by threonine 124, asparagine 128, and aspartate 129. Asparagine 128 lines the L-citrulline pocket. L-citrulline contacts are provided by arginine 132, serine 181, serine 190, glutamate 266, and tyrosine 278.

This sequence belongs to the argininosuccinate synthase family. Type 1 subfamily. In terms of assembly, homotetramer.

It is found in the cytoplasm. It carries out the reaction L-citrulline + L-aspartate + ATP = 2-(N(omega)-L-arginino)succinate + AMP + diphosphate + H(+). It functions in the pathway amino-acid biosynthesis; L-arginine biosynthesis; L-arginine from L-ornithine and carbamoyl phosphate: step 2/3. The chain is Argininosuccinate synthase from Aliivibrio fischeri (strain ATCC 700601 / ES114) (Vibrio fischeri).